The primary structure comprises 158 residues: Respiratory supercomplex factor 1, mitochondrial (158 aa).

Residues 5 to 96 (PSSFDSDADD…TNKNERESHE (92 aa)) enclose the HIG1 domain. A run of 2 helical transmembrane segments spans residues 32–52 (PLVP…VLNV) and 68–88 (VALQ…YGTN). The stretch at 88–158 (NKNERESHEE…LKDLEERLKK (71 aa)) forms a coiled coil. Positions 128–158 (AELARQKAKEMEQETSKLQQELKDLEERLKK) are disordered.

It belongs to the RCF1 family. In terms of assembly, associates with the respiratory chain complex III/complex IV supercomplex.

The protein localises to the mitochondrion membrane. Cytochrome c oxidase subunit which plays a role in assembly of respiratory supercomplexes. This Kluyveromyces lactis (strain ATCC 8585 / CBS 2359 / DSM 70799 / NBRC 1267 / NRRL Y-1140 / WM37) (Yeast) protein is Respiratory supercomplex factor 1, mitochondrial (RCF1).